Reading from the N-terminus, the 303-residue chain is UDP-3-O-acyl-N-acetylglucosamine deacetylase (303 aa).

Residues His78, His237, and Asp241 each coordinate Zn(2+). The active-site Proton donor is His264.

This sequence belongs to the LpxC family. Requires Zn(2+) as cofactor.

It catalyses the reaction a UDP-3-O-[(3R)-3-hydroxyacyl]-N-acetyl-alpha-D-glucosamine + H2O = a UDP-3-O-[(3R)-3-hydroxyacyl]-alpha-D-glucosamine + acetate. The protein operates within glycolipid biosynthesis; lipid IV(A) biosynthesis; lipid IV(A) from (3R)-3-hydroxytetradecanoyl-[acyl-carrier-protein] and UDP-N-acetyl-alpha-D-glucosamine: step 2/6. In terms of biological role, catalyzes the hydrolysis of UDP-3-O-myristoyl-N-acetylglucosamine to form UDP-3-O-myristoylglucosamine and acetate, the committed step in lipid A biosynthesis. In Saccharophagus degradans (strain 2-40 / ATCC 43961 / DSM 17024), this protein is UDP-3-O-acyl-N-acetylglucosamine deacetylase.